Reading from the N-terminus, the 353-residue chain is Histidinol-phosphate aminotransferase (353 aa).

Residue lysine 211 is modified to N6-(pyridoxal phosphate)lysine.

The protein belongs to the class-II pyridoxal-phosphate-dependent aminotransferase family. Histidinol-phosphate aminotransferase subfamily. In terms of assembly, homodimer. Requires pyridoxal 5'-phosphate as cofactor.

The enzyme catalyses L-histidinol phosphate + 2-oxoglutarate = 3-(imidazol-4-yl)-2-oxopropyl phosphate + L-glutamate. The protein operates within amino-acid biosynthesis; L-histidine biosynthesis; L-histidine from 5-phospho-alpha-D-ribose 1-diphosphate: step 7/9. In Klebsiella pneumoniae subsp. pneumoniae (strain ATCC 700721 / MGH 78578), this protein is Histidinol-phosphate aminotransferase.